We begin with the raw amino-acid sequence, 783 residues long: BMP/retinoic acid-inducible neural-specific protein 2 (783 aa).

A signal peptide spans 1-33; that stretch reads MRWQCGTRFRGLRPAVAPWTALLALGLPGWVLA. The region spanning 85-281 is the MACPF domain; it reads RYRIYREFAR…FVAAALSYIT (197 aa). N-linked (GlcNAc...) asparagine glycans are attached at residues Asn185, Asn354, Asn473, Asn579, Asn626, and Asn658.

The protein belongs to the BRINP family.

Its subcellular location is the secreted. In terms of biological role, inhibits neuronal cell proliferation by negative regulation of the cell cycle transition. In Homo sapiens (Human), this protein is BMP/retinoic acid-inducible neural-specific protein 2 (BRINP2).